A 33-amino-acid polypeptide reads, in one-letter code: Protamine TP17 (33 aa).

The interval 1–33 is disordered; that stretch reads MPRRRRSSSRPVRRRRRPRVSRRRRRRGRRRRR.

Testis.

It localises to the nucleus. It is found in the chromosome. In terms of biological role, protamines substitute for histones in the chromatin of sperm during the haploid phase of spermatogenesis. They compact sperm DNA into a highly condensed, stable and inactive complex. This chain is Protamine TP17, found in Oncorhynchus mykiss (Rainbow trout).